A 210-amino-acid chain; its full sequence is Uracil phosphoribosyltransferase (210 aa).

Residues R80, R105, and D132–S140 contribute to the 5-phospho-alpha-D-ribose 1-diphosphate site. Uracil-binding positions include I195 and G200–A202. D201 serves as a coordination point for 5-phospho-alpha-D-ribose 1-diphosphate.

It belongs to the UPRTase family. Mg(2+) serves as cofactor.

It carries out the reaction UMP + diphosphate = 5-phospho-alpha-D-ribose 1-diphosphate + uracil. The protein operates within pyrimidine metabolism; UMP biosynthesis via salvage pathway; UMP from uracil: step 1/1. With respect to regulation, allosterically activated by GTP. Functionally, catalyzes the conversion of uracil and 5-phospho-alpha-D-ribose 1-diphosphate (PRPP) to UMP and diphosphate. The sequence is that of Uracil phosphoribosyltransferase from Caldanaerobacter subterraneus subsp. tengcongensis (strain DSM 15242 / JCM 11007 / NBRC 100824 / MB4) (Thermoanaerobacter tengcongensis).